Reading from the N-terminus, the 64-residue chain is MTKGTPSQGRHNKGSNHIVCRRCGRRAYHVRKKACAACGFGKSTKIKRFAWKWKKVTGKGNRLK.

Residues C20, C23, C35, and C38 each contribute to the Zn(2+) site. Residues 20–38 (CRRCGRRAYHVRKKACAAC) form a C4-type zinc finger.

This sequence belongs to the eukaryotic ribosomal protein eL37 family. Zn(2+) serves as cofactor.

In terms of biological role, binds to the 23S rRNA. This Methanococcus vannielii (strain ATCC 35089 / DSM 1224 / JCM 13029 / OCM 148 / SB) protein is Large ribosomal subunit protein eL37.